We begin with the raw amino-acid sequence, 636 residues long: p-hydroxybenzoate-m-hydroxylase A (636 aa).

Residues 10-39 (DIVI…HIDN), 241-243 (RLY), Tyr289, and Asp310 each bind FAD. The chain crosses the membrane as a helical span at residues 11–28 (IVIVGAGPVGIVLSLCMS).

The protein belongs to the PheA/TfdB FAD monooxygenase family. Requires FAD as cofactor.

It localises to the membrane. It catalyses the reaction 4-hydroxybenzoate + NADH + O2 + H(+) = 3,4-dihydroxybenzoate + NAD(+) + H2O. It carries out the reaction 4-hydroxybenzoate + NADPH + O2 + H(+) = 3,4-dihydroxybenzoate + NADP(+) + H2O. FAD-dependent monooxygenase; part of the benzoic acid degradation pathway also known as the protocatechuic acid pathway. Benzoic acid debradation begins with the conversion of benzoic acid into 4-hydroxybenzoic acid through hydroxylation by the benzoate-4-monooxygenase bphA, and its partner NADPH-cytochrome P450 reductase cprA which act as a mediator in electron donation from NADPH. 4-Hydroxybenzoic acid is then converted into 3,4-dihydroxybenzoic acid (also called protocatechuic acid) by the p-hydroxybenzoate-m-hydroxylase phhA. Protocatechuic acid is converted into 3-carboxy-cis,cis-muconic acid by the intradiol ring-cleavage dioxygenase prcA, which is further metabolized through the 3-oxoadipate pathway to finally enter the tricarboxylic acid cycle (TCA). The chain is p-hydroxybenzoate-m-hydroxylase A from Aspergillus niger (strain ATCC MYA-4892 / CBS 513.88 / FGSC A1513).